Consider the following 1706-residue polypeptide: Brefeldin A-inhibited guanine nucleotide-exchange protein 4 (1706 aa).

Residues 555–742 enclose the SEC7 domain; that stretch reads MLEQRRAYKI…GSLYDRVVKE (188 aa). Residue E657 is part of the active site.

Homodimer.

Its subcellular location is the cytoplasm. The protein resides in the cytosol. It localises to the membrane. Inhibited by brefeldin A. Its function is as follows. Activates the ARF proteins by exchanging bound GDP for free GTP. Plays a role in vesicular protein sorting. This is Brefeldin A-inhibited guanine nucleotide-exchange protein 4 (BIG4) from Arabidopsis thaliana (Mouse-ear cress).